A 179-amino-acid chain; its full sequence is Large ribosomal subunit protein uL5 (179 aa).

This sequence belongs to the universal ribosomal protein uL5 family. Part of the 50S ribosomal subunit; part of the 5S rRNA/L5/L18/L25 subcomplex. Contacts the 5S rRNA and the P site tRNA. Forms a bridge to the 30S subunit in the 70S ribosome.

In terms of biological role, this is one of the proteins that bind and probably mediate the attachment of the 5S RNA into the large ribosomal subunit, where it forms part of the central protuberance. In the 70S ribosome it contacts protein S13 of the 30S subunit (bridge B1b), connecting the 2 subunits; this bridge is implicated in subunit movement. Contacts the P site tRNA; the 5S rRNA and some of its associated proteins might help stabilize positioning of ribosome-bound tRNAs. This is Large ribosomal subunit protein uL5 from Bordetella avium (strain 197N).